The chain runs to 318 residues: Pyrroline-5-carboxylate reductase ucsG (318 aa).

It belongs to the pyrroline-5-carboxylate reductase family.

It participates in mycotoxin biosynthesis. Functionally, pyrroline-5-carboxylate reductase; part of the gene cluster that mediates the biosynthesis of UCS1025A, a member of the pyrrolizidinone family that acts as a strong telomerase inhibitor and displays potent antibacterial and antitumor properties. These compounds share a hemiaminal-containing pyrrolizidinone core fused with a gamma-lactone, giving a furopyrrolizidine that is connected to a decalin fragment. The polyketide synthase module (PKS) of the PKS-NRPS ucsA is responsible for the synthesis of the polyketide backbone via the condensation of an acetyl-CoA starter unit with 6 malonyl-CoA units. The downstream nonribosomal peptide synthetase (NRPS) module then amidates the carboxyl end of the polyketide with a 2S,3S-methylproline derived from L-isoleucine by the 2-oxoglutarate-dependent dioxygenase ucsF which converts L-isoleucine to (4S,5S)-4-methylpyrroline-5-carboxylate that is further converted to 2S,3S-methylproline by the pyrroline-5-carboxylate reductase ucsG. Reductive release of the completed aminoacyl polyketide from the assembly line can form the 3-pyrrolin-2-one structure via an intramolecular Knoevenagel reaction. Because ucsA lacks a designated enoylreductase (ER) domain, the required activity is provided the enoyl reductase ucsL. This keto acyclic precursor is the substrate of the Diels-Alderase ucsH, that catalyzes the Diels-Alder cycloaddition. Oxidation of the 3S-methyl group to a carboxylate by the cytochrome P450 monooxygenase ucsK allows an oxa-Michael cyclization that might involve the reductase/dehydrogenase ucsI and which furnishes the furopyrrolizidine. The oxidase ucsJ likely plays a critical role in stereoselective reduction of the C5-C6 double bond to afford the required R-configured carboxylate group. Further enolization and oxidation at C5 by an unidentified enzyme affords the last intermediate that can undergo oxa-Michael cyclization to yield UCS1025A. The protein is Pyrroline-5-carboxylate reductase ucsG of Acremonium sp.